We begin with the raw amino-acid sequence, 104 residues long: Large ribosomal subunit protein bL21 (104 aa).

It belongs to the bacterial ribosomal protein bL21 family. In terms of assembly, part of the 50S ribosomal subunit. Contacts protein L20.

In terms of biological role, this protein binds to 23S rRNA in the presence of protein L20. The sequence is that of Large ribosomal subunit protein bL21 from Azobacteroides pseudotrichonymphae genomovar. CFP2.